Reading from the N-terminus, the 1060-residue chain is Positive regulator of purine utilization (1060 aa).

Over residues 1–15 the composition is skewed to polar residues; it reads MLNPSTSDIHTSPTA. Residues 1-48 are disordered; it reads MLNPSTSDIHTSPTAVGNGRKRPHPIADSGSAMPSDPSAQQLPHPANE. A DNA-binding region (zn(2)-C6 fungal-type) is located at residues 67-94; that stretch reads CNRCRQRKNRCDQRLPRCQACEKAGVRC. 5 disordered regions span residues 163–207, 251–282, 367–391, 811–862, and 877–969; these read EIAA…DAED, SVPG…TTRD, AEDQ…SRQY, VQTS…RFDM, and RQGS…PSGM. Composition is skewed to basic and acidic residues over residues 170-182, 189-207, and 260-269; these read SNDK…KEKN, KASR…DAED, and GPSRPKERLP. The span at 272–282 shows a compositional bias: polar residues; sequence ATGTEGSTTRD. Positions 367 to 377 are enriched in basic and acidic residues; it reads AEDQKEGRDHS. Over residues 811 to 831 the composition is skewed to polar residues; sequence VQTSTSGSRQFNATQSRSRPY. 2 stretches are compositionally biased toward low complexity: residues 832–859 and 930–952; these read SRQQ…PLPR and PRYY…AASG.

It localises to the nucleus. Its function is as follows. Mediates the induction of a number of unlinked genes involved in purine utilization. Binds to the consensus sequence 5'-TCGGNNNNNNCCGA-3'. This Emericella nidulans (strain FGSC A4 / ATCC 38163 / CBS 112.46 / NRRL 194 / M139) (Aspergillus nidulans) protein is Positive regulator of purine utilization (uaY).